A 128-amino-acid polypeptide reads, in one-letter code: Large ribosomal subunit protein bL12 (128 aa).

It belongs to the bacterial ribosomal protein bL12 family. Homodimer. Part of the ribosomal stalk of the 50S ribosomal subunit. Forms a multimeric L10(L12)X complex, where L10 forms an elongated spine to which 2 to 4 L12 dimers bind in a sequential fashion. Binds GTP-bound translation factors.

Functionally, forms part of the ribosomal stalk which helps the ribosome interact with GTP-bound translation factors. Is thus essential for accurate translation. The chain is Large ribosomal subunit protein bL12 from Desulfosudis oleivorans (strain DSM 6200 / JCM 39069 / Hxd3) (Desulfococcus oleovorans).